Here is a 137-residue protein sequence, read N- to C-terminus: uncharacterized protein (137 aa).

The protein to E.coli YfdK.

This is an uncharacterized protein from Escherichia coli (strain K12).